A 279-amino-acid chain; its full sequence is Bifunctional protein FolD (279 aa).

NADP(+) contacts are provided by residues 159–161 (GRS), Ser184, and Thr225.

It belongs to the tetrahydrofolate dehydrogenase/cyclohydrolase family. In terms of assembly, homodimer.

It carries out the reaction (6R)-5,10-methylene-5,6,7,8-tetrahydrofolate + NADP(+) = (6R)-5,10-methenyltetrahydrofolate + NADPH. It catalyses the reaction (6R)-5,10-methenyltetrahydrofolate + H2O = (6R)-10-formyltetrahydrofolate + H(+). The protein operates within one-carbon metabolism; tetrahydrofolate interconversion. Catalyzes the oxidation of 5,10-methylenetetrahydrofolate to 5,10-methenyltetrahydrofolate and then the hydrolysis of 5,10-methenyltetrahydrofolate to 10-formyltetrahydrofolate. The chain is Bifunctional protein FolD from Methanospirillum hungatei JF-1 (strain ATCC 27890 / DSM 864 / NBRC 100397 / JF-1).